A 412-amino-acid chain; its full sequence is Inactive serine protease 35 (412 aa).

An N-terminal signal peptide occupies residues 1–23; it reads MGAMFFGLMLFTLGWTLIDGSES. Asn-110 carries an N-linked (GlcNAc...) asparagine glycan. Residues 124–407 enclose the Peptidase S1 domain; it reads VYGTDSRFSI…ICLWMHGDDA (284 aa). Cys-154 and Cys-170 are disulfide-bonded. A compositionally biased stretch (basic residues) spans 192–207; the sequence is RNKGGGKRRRGSRRNR. The tract at residues 192–246 is disordered; sequence RNKGGGKRRRGSRRNRREVSGAGREGSQDSLKETAKAGRRRKGSARRQRAADGRP. Residues 217–227 are compositionally biased toward basic and acidic residues; the sequence is GSQDSLKETAK. Basic residues predominate over residues 228 to 239; that stretch reads AGRRRKGSARRQ.

Belongs to the peptidase S1 family.

The protein localises to the secreted. This chain is Inactive serine protease 35 (PRSS35), found in Bos taurus (Bovine).